Consider the following 59-residue polypeptide: Temporin-CDYd (59 aa).

The signal sequence occupies residues 1–22; the sequence is MFTLKKSMLLLLFLGTISLTLC. Residues 23 to 42 constitute a propeptide that is removed on maturation; sequence EEERDANEEEENGGEVKEEE.

It belongs to the frog skin active peptide (FSAP) family. Temporin subfamily. In terms of tissue distribution, expressed by the skin glands.

The protein resides in the secreted. Functionally, antimicrobial peptide. This is Temporin-CDYd from Rana dybowskii (Dybovsky's frog).